Here is a 181-residue protein sequence, read N- to C-terminus: Oligoribonuclease (181 aa).

Positions 8-171 (LIWIDLEMTG…QDIQESIAEL (164 aa)) constitute an Exonuclease domain. Tyr129 is a catalytic residue.

It belongs to the oligoribonuclease family.

It localises to the cytoplasm. 3'-to-5' exoribonuclease specific for small oligoribonucleotides. This is Oligoribonuclease from Shewanella sp. (strain ANA-3).